The primary structure comprises 437 residues: MLWKLTDNIKYEDCEDRHDGTSNGTARLPQLGTVGQSPYTSAPPLSHTPNADFQPPYFPPPYQPIYPQSQDPYSHVNDPYSLNPLHAQPQPQHPGWPGQRQSQESGLLHTHRGLPHQLSGLDPRRDYRRHEDLLHGPHALSSGLGDLSIHSLPHAIEEVPHVEDPGINIPDQTVIKKGPVSLSKSNSNAVSAIPINKDNLFGGVVNPNEVFCSVPGRLSLLSSTSKYKVTVAEVQRRLSPPECLNASLLGGVLRRAKSKNGGRSLREKLDKIGLNLPAGRRKAANVTLLTSLVEGEAVHLARDFGYVCETEFPAKAVAEFLNRQHSDPNEQVTRKNMLLATKQICKEFTDLLAQDRSPLGNSRPNPILEPGIQSCLTHFNLISHGFGSPAVCAAVTALQNYLTEALKAMDKMYLSNNPNSHTDNNAKSSDKEEKHRK.

Lysine 10 participates in a covalent cross-link: Glycyl lysine isopeptide (Lys-Gly) (interchain with G-Cter in SUMO); alternate. Residue lysine 10 forms a Glycyl lysine isopeptide (Lys-Gly) (interchain with G-Cter in SUMO2); alternate linkage. Residues 14–107 (CEDRHDGTSN…GQRQSQESGL (94 aa)) are disordered. Residues 57–62 (YFPPPY) carry the PPxY motif motif. Composition is skewed to low complexity over residues 65-74 (IYPQSQDPYS) and 88-101 (QPQP…GQRQ). Glycyl lysine isopeptide (Lys-Gly) (interchain with G-Cter in SUMO2) cross-links involve residues lysine 177 and lysine 184. Phosphoserine; by PKA is present on serine 239. The tract at residues 280–410 (RRKAANVTLL…YLTEALKAMD (131 aa)) is H-S-H (helix-span-helix), dimerization. Residues 414 to 427 (LSNNPNSHTDNNAK) show a composition bias toward polar residues. The disordered stretch occupies residues 414-437 (LSNNPNSHTDNNAKSSDKEEKHRK). A compositionally biased stretch (basic and acidic residues) spans 428 to 437 (SSDKEEKHRK).

Belongs to the AP-2 family. Binds DNA as a dimer. Can form homodimers or heterodimers with other AP-2 family members. Interacts with WWOX. Interacts with CITED4. Interacts with UBE2I. Interacts with RALBP1 in a complex also containing EPN1 and NUMB during interphase and mitosis. Interacts with KCTD1; this interaction represses transcription activation. Interacts (via C-terminus) with CITED2 (via C-terminus); the interaction stimulates TFAP2A-transcriptional activation. Interacts (via N-terminus) with EP300 (via N-terminus); the interaction requires CITED2. Interacts with KCTD15; this interaction inhibits TFAP2A transcriptional activation. In terms of processing, sumoylated on Lys-10; which inhibits transcriptional activity.

It localises to the nucleus. Functionally, sequence-specific DNA-binding protein that interacts with inducible viral and cellular enhancer elements to regulate transcription of selected genes. AP-2 factors bind to the consensus sequence 5'-GCCNNNGGC-3' and activate genes involved in a large spectrum of important biological functions including proper eye, face, body wall, limb and neural tube development. They also suppress a number of genes including MCAM/MUC18, C/EBP alpha and MYC. AP-2-alpha is the only AP-2 protein required for early morphogenesis of the lens vesicle. Together with the CITED2 coactivator, stimulates the PITX2 P1 promoter transcription activation. Associates with chromatin to the PITX2 P1 promoter region. The chain is Transcription factor AP-2-alpha (TFAP2A) from Homo sapiens (Human).